A 303-amino-acid polypeptide reads, in one-letter code: MHSPVLLLIDGFNLLSRGYFATSYGKDEAQLPRNEAGYYINALRVFFPKLFQLIREHNVTHVAVAWDVKREDSHRRQAFAFYKASRGELPEALIEQYETATSLLEEIGVAQVTIPPYEADDTIGAFACRWAKEEKGHCFIYSNDRDLLQLLSKSTSQIISSKGKDLIYTEENFRNDYNISPAQWVDVKALLGDKSDNIPGCPGVGEKSALPLIQQYGTIETLYEQIEDLDPKYKRYHKKLVAGEESVIISKELATITTEIEAISSFSLNSLVLTTPADLIIDTLARCGIRVKLAPVQTELKLG.

The 5'-3' exonuclease domain maps to 179-262 (ISPAQWVDVK…LATITTEIEA (84 aa)).

5'-3' exonuclease acting preferentially on double-stranded DNA. The sequence is that of 5'-3' exonuclease from Halalkalibacterium halodurans (strain ATCC BAA-125 / DSM 18197 / FERM 7344 / JCM 9153 / C-125) (Bacillus halodurans).